We begin with the raw amino-acid sequence, 70 residues long: U-scoloptoxin(04)-Er3a (70 aa).

The signal sequence occupies residues 1–24; the sequence is MAAIRNLLILTMLLIVCVSWNADA.

The protein belongs to the scoloptoxin-04 family. In terms of processing, contains 2 disulfide bonds. Expressed by the venom gland.

Its subcellular location is the secreted. In Ethmostigmus rubripes (Giant centipede), this protein is U-scoloptoxin(04)-Er3a.